The primary structure comprises 890 residues: Translation initiation factor IF-2 (890 aa).

Residues 45-303 (LIDHLNQKNS…SLQQGFQKPA (259 aa)) are disordered. The span at 67 to 81 (STLNIPGTGGKSKSV) shows a compositional bias: polar residues. Residues 92–217 (VKRDPQEAER…RMAEENKWTD (126 aa)) show a composition bias toward basic and acidic residues. The segment covering 252–266 (GRGRNAKAARPKKGN) has biased composition (basic residues). Over residues 267–280 (KHAESKADREEARA) the composition is skewed to basic and acidic residues. In terms of domain architecture, tr-type G spans 389 to 558 (PRAPVVTIMG…LLQAEVLELK (170 aa)). Residues 398-405 (GHVDHGKT) are G1. A GTP-binding site is contributed by 398–405 (GHVDHGKT). Residues 423–427 (GITQH) are G2. The G3 stretch occupies residues 444-447 (DTPG). Residues 444–448 (DTPGH) and 498–501 (NKID) contribute to the GTP site. The interval 498-501 (NKID) is G4. The interval 534–536 (SAK) is G5. N6-acetyllysine is present on lysine 808.

Belongs to the TRAFAC class translation factor GTPase superfamily. Classic translation factor GTPase family. IF-2 subfamily.

Its subcellular location is the cytoplasm. One of the essential components for the initiation of protein synthesis. Protects formylmethionyl-tRNA from spontaneous hydrolysis and promotes its binding to the 30S ribosomal subunits. Also involved in the hydrolysis of GTP during the formation of the 70S ribosomal complex. The protein is Translation initiation factor IF-2 of Shigella boydii serotype 18 (strain CDC 3083-94 / BS512).